Consider the following 118-residue polypeptide: Putative pterin-4-alpha-carbinolamine dehydratase (118 aa).

This sequence belongs to the pterin-4-alpha-carbinolamine dehydratase family.

It carries out the reaction (4aS,6R)-4a-hydroxy-L-erythro-5,6,7,8-tetrahydrobiopterin = (6R)-L-erythro-6,7-dihydrobiopterin + H2O. The chain is Putative pterin-4-alpha-carbinolamine dehydratase from Stutzerimonas stutzeri (strain A1501) (Pseudomonas stutzeri).